The following is a 1075-amino-acid chain: Flocculation protein FLO5 (1075 aa).

The signal sequence occupies residues 1 to 24 (MTIAHHCIFLVILAFLALINVASG). The 176-residue stretch at 74 to 249 (GGQTDISIDY…GTTVSDNFEG (176 aa)) folds into the PA14 domain. N-linked (GlcNAc...) asparagine glycans are attached at residues asparagine 135, asparagine 187, asparagine 203, and asparagine 262. The tract at residues 197–240 (DGSLPDNITGTVYMYAGYYYPLKVVYSNAVSWGTLPISVELPDG) is sugar recognition. 8 repeat units span residues 278-322 (TTTE…STIT), 323-367 (TTTE…GLIT), 368-412 (TTTE…GLIT), 413-457 (TTTE…GLIT), 458-502 (TTTE…GLIS), 503-547 (TTTE…GLIT), 548-592 (TTTE…GLIT), and 593-637 (RTTE…ISSS). The 8 X 45 AA approximate tandem repeats, Thr-rich stretch occupies residues 278–637 (TTTEPWTGTF…RTPTTAISSS (360 aa)). 4 stretches are compositionally biased toward low complexity: residues 322–345 (TTTT…VTGT), 367–390 (TTTT…VTGT), 457–480 (TTTT…VTGT), and 547–570 (TTTT…VTGT). 4 disordered regions span residues 322–349 (TTTT…NGQP), 366–394 (ITTT…NGQP), 456–484 (ITTT…NGQP), and 546–574 (ITTT…NGQP). Asparagine 663 carries N-linked (GlcNAc...) asparagine glycosylation. 2 repeat units span residues 667–686 (VISS…TSSS) and 687–706 (FISS…IFSE). The 2 X 20 AA approximate tandem repeats, Ser-rich stretch occupies residues 667–706 (VISSSVISSSVTSSLVTSSSFISSSVISSSTTTSTSIFSE). The span at 702 to 762 (SIFSESSTSS…SLPPVTSATT (61 aa)) shows a compositional bias: low complexity. The interval 702–781 (SIFSESSTSS…PATTTKTSEQ (80 aa)) is disordered. A glycan (N-linked (GlcNAc...) asparagine) is linked at asparagine 749. A compositionally biased stretch (polar residues) spans 763 to 781 (GQETASSLPPATTTKTSEQ). 3 tandem repeats follow at residues 775-825 (TTKT…CPIS), 847-897 (TTET…CPIS), and 898-948 (TTES…RPQT). Positions 775–948 (TTKTSEQTTL…TVYPTWRPQT (174 aa)) are 3 X 51 AA approximate repeats, Ser/Thr-rich. Residues 948–958 (TTNEQSVSSKM) show a composition bias toward polar residues. Disordered regions lie at residues 948–980 (TTNE…AVTS) and 1016–1038 (SLTS…SSMV). 2 stretches are compositionally biased toward low complexity: residues 959–977 (NSAT…TKTA) and 1016–1026 (SLTSSGLSTMS). Polar residues predominate over residues 1027-1038 (QQPRSTPASSMV). The GPI-anchor amidated glycine moiety is linked to residue glycine 1052. A propeptide spans 1053 to 1075 (SANSLLAGSGLSVFIASLLLAII) (removed in mature form).

Belongs to the flocculin family. Post-translationally, extensively O-glycosylated. In terms of processing, the GPI-anchor is attached to the protein in the endoplasmic reticulum and serves to target the protein to the cell surface. There, the glucosamine-inositol phospholipid moiety is cleaved off and the GPI-modified mannoprotein is covalently attached via its lipidless GPI glycan remnant to the 1,6-beta-glucan of the outer cell wall layer.

It localises to the secreted. The protein localises to the cell wall. The protein resides in the membrane. In terms of biological role, cell wall protein that participates directly in adhesive cell-cell interactions during yeast flocculation, a reversible, asexual and Ca(2+)-dependent process in which cells adhere to form aggregates (flocs) consisting of thousands of cells. The lectin-like protein sticks out of the cell wall of flocculent cells and selectively binds mannose residues in the cell walls of adjacent cells. Activity is inhibited by mannose, but not by glucose, maltose, sucrose or galactose. The polypeptide is Flocculation protein FLO5 (FLO5) (Saccharomyces cerevisiae (strain ATCC 204508 / S288c) (Baker's yeast)).